We begin with the raw amino-acid sequence, 858 residues long: Beta-galactosidase 6 (858 aa).

A signal peptide spans 1-30 (MAAATVGVLLRLLLLPVVVVVSLLVGASRA). Asn-32 is a glycosylation site (N-linked (GlcNAc...) asparagine). The Proton donor role is filled by Glu-189. The active-site Nucleophile is Glu-258. Residues Asn-259, Asn-482, Asn-507, Asn-595, and Asn-830 are each glycosylated (N-linked (GlcNAc...) asparagine). The region spanning 772 to 858 (QTQGPALRLE…KSLVVEAACS (87 aa)) is the SUEL-type lectin domain.

This sequence belongs to the glycosyl hydrolase 35 family.

It localises to the secreted. It is found in the extracellular space. The protein resides in the apoplast. It catalyses the reaction Hydrolysis of terminal non-reducing beta-D-galactose residues in beta-D-galactosides.. Releases galactose by hydrolysis of plant cell wall galactose-containing polysaccharides such as galacto-xyloglucan, pectic galactan and galactan (in vitro). The protein is Beta-galactosidase 6 of Oryza sativa subsp. japonica (Rice).